Reading from the N-terminus, the 717-residue chain is DNA ligase (717 aa).

NAD(+) is bound by residues 41–45 (DARYD), 90–91 (SL), and E124. K126 acts as the N6-AMP-lysine intermediate in catalysis. NAD(+)-binding residues include R147, E183, K299, and K323. Zn(2+) is bound by residues C428, C431, C446, and C452. Residues 636-717 (ADYSPVAGKT…WLQLINEHHI (82 aa)) enclose the BRCT domain.

It belongs to the NAD-dependent DNA ligase family. LigA subfamily. Requires Mg(2+) as cofactor. It depends on Mn(2+) as a cofactor.

It catalyses the reaction NAD(+) + (deoxyribonucleotide)n-3'-hydroxyl + 5'-phospho-(deoxyribonucleotide)m = (deoxyribonucleotide)n+m + AMP + beta-nicotinamide D-nucleotide.. DNA ligase that catalyzes the formation of phosphodiester linkages between 5'-phosphoryl and 3'-hydroxyl groups in double-stranded DNA using NAD as a coenzyme and as the energy source for the reaction. It is essential for DNA replication and repair of damaged DNA. This Bartonella bacilliformis (strain ATCC 35685 / KC583 / Herrer 020/F12,63) protein is DNA ligase.